The following is a 159-amino-acid chain: NADH-quinone oxidoreductase subunit B (159 aa).

[4Fe-4S] cluster is bound by residues cysteine 37, cysteine 38, cysteine 102, and cysteine 132.

It belongs to the complex I 20 kDa subunit family. In terms of assembly, NDH-1 is composed of 14 different subunits. Subunits NuoB, C, D, E, F, and G constitute the peripheral sector of the complex. The cofactor is [4Fe-4S] cluster.

The protein localises to the cell inner membrane. The catalysed reaction is a quinone + NADH + 5 H(+)(in) = a quinol + NAD(+) + 4 H(+)(out). Functionally, NDH-1 shuttles electrons from NADH, via FMN and iron-sulfur (Fe-S) centers, to quinones in the respiratory chain. Couples the redox reaction to proton translocation (for every two electrons transferred, four hydrogen ions are translocated across the cytoplasmic membrane), and thus conserves the redox energy in a proton gradient. This Ruthia magnifica subsp. Calyptogena magnifica protein is NADH-quinone oxidoreductase subunit B.